A 653-amino-acid polypeptide reads, in one-letter code: Rab proteins geranylgeranyltransferase component A 1 (653 aa).

Residues 606 to 653 (PPPPNPEDIILDGDSLQPEASESSAIPEANSETFKESTNLGNLEESSE) form a disordered region. The segment covering 623 to 646 (PEASESSAIPEANSETFKESTNLG) has biased composition (polar residues).

The protein belongs to the Rab GDI family. As to quaternary structure, monomer. Heterotrimer composed of RABGGTA, RABGGTB and CHM; within this trimer, RABGGTA and RABGGTB form the catalytic component B, while CHM (component A) mediates Rab protein binding. Can associate with the Rab GGTase dimer (RGGT or component B) prior to Rab protein binding; the association is stabilized by geranylgeranyl pyrophosphate (GGpp). The CHM:RGGT:Rab complex is destabilized by GGpp. Interacts with RAB1A, RAB1B, RAB5A, RAB7A and RAB27A and mediates their prenylation. Interacts with the non-phosphorylated forms of RAB3A, RAB3B, RAB3C, RAB3D, RAB5B, RAB5C, RAB8A, RAB8B, RAB10, RAB12, RAB35, and RAB43.

The protein resides in the cytoplasm. It localises to the cytosol. In terms of biological role, substrate-binding subunit of the Rab geranylgeranyltransferase (GGTase) complex. Binds unprenylated Rab proteins and presents the substrate peptide to the catalytic component B composed of RABGGTA and RABGGTB, and remains bound to it after the geranylgeranyl transfer reaction. The component A is thought to be regenerated by transferring its prenylated Rab back to the donor membrane. Besides, a pre-formed complex consisting of CHM and the Rab GGTase dimer (RGGT or component B) can bind to and prenylate Rab proteins; this alternative pathway is proposed to be the predominant pathway for Rab protein geranylgeranylation. This is Rab proteins geranylgeranyltransferase component A 1 (CHM) from Homo sapiens (Human).